A 771-amino-acid chain; its full sequence is Probable exo-1,4-beta-xylosidase bxlB (771 aa).

The signal sequence occupies residues 1–25 (MVGLTPQHYGNAIALMTYLASTALA). Residue N67 is glycosylated (N-linked (GlcNAc...) asparagine). The active site involves D293. 5 N-linked (GlcNAc...) asparagine glycosylation sites follow: N305, N345, N423, N462, and N463.

The protein belongs to the glycosyl hydrolase 3 family.

Its subcellular location is the secreted. It catalyses the reaction Hydrolysis of (1-&gt;4)-beta-D-xylans, to remove successive D-xylose residues from the non-reducing termini.. It functions in the pathway glycan degradation; xylan degradation. In terms of biological role, xylan 1,4-beta-xylosidase involved in the hydrolysis of xylan, a major structural heterogeneous polysaccharide found in plant biomass representing the second most abundant polysaccharide in the biosphere, after cellulose. This chain is Probable exo-1,4-beta-xylosidase bxlB (bxlB), found in Aspergillus clavatus (strain ATCC 1007 / CBS 513.65 / DSM 816 / NCTC 3887 / NRRL 1 / QM 1276 / 107).